We begin with the raw amino-acid sequence, 478 residues long: DNA-directed RNA polymerase subunit alpha (478 aa).

The alpha N-terminal domain (alpha-NTD) stretch occupies residues 1-341 (MNKKIQDFFL…LDCMRLLNYE (341 aa)). The alpha C-terminal domain (alpha-CTD) stretch occupies residues 365-478 (RFYNSREDKT…KLGSRNEKNL (114 aa)).

This sequence belongs to the RNA polymerase alpha chain family. As to quaternary structure, in plastids the minimal PEP RNA polymerase catalytic core is composed of four subunits: alpha, beta, beta', and beta''. When a (nuclear-encoded) sigma factor is associated with the core the holoenzyme is formed, which can initiate transcription.

Its subcellular location is the plastid. It is found in the chloroplast. The catalysed reaction is RNA(n) + a ribonucleoside 5'-triphosphate = RNA(n+1) + diphosphate. DNA-dependent RNA polymerase catalyzes the transcription of DNA into RNA using the four ribonucleoside triphosphates as substrates. This chain is DNA-directed RNA polymerase subunit alpha (rpoA), found in Tetradesmus obliquus (Green alga).